Here is a 650-residue protein sequence, read N- to C-terminus: Acetyl-coenzyme A synthetase (650 aa).

CoA is bound by residues 191-194, Thr311, and Asn335; that span reads RGGR. Residues 387–389, 411–416, Asp500, and Arg515 each bind ATP; these read GEP and DTWWQT. A CoA-binding site is contributed by Ser523. An ATP-binding site is contributed by Arg526. Residues Val537, His539, and Val542 each contribute to the Mg(2+) site. Arg584 is a CoA binding site. Lys609 carries the N6-acetyllysine modification.

This sequence belongs to the ATP-dependent AMP-binding enzyme family. The cofactor is Mg(2+). Post-translationally, acetylated. Deacetylation by the SIR2-homolog deacetylase activates the enzyme.

The catalysed reaction is acetate + ATP + CoA = acetyl-CoA + AMP + diphosphate. In terms of biological role, catalyzes the conversion of acetate into acetyl-CoA (AcCoA), an essential intermediate at the junction of anabolic and catabolic pathways. AcsA undergoes a two-step reaction. In the first half reaction, AcsA combines acetate with ATP to form acetyl-adenylate (AcAMP) intermediate. In the second half reaction, it can then transfer the acetyl group from AcAMP to the sulfhydryl group of CoA, forming the product AcCoA. The polypeptide is Acetyl-coenzyme A synthetase (Shewanella sp. (strain MR-4)).